The chain runs to 171 residues: 3-hydroxyanthranilate 3,4-dioxygenase (171 aa).

Residue Arg45 participates in O2 binding. 3 residues coordinate Fe cation: His49, Glu55, and His93. Position 55 (Glu55) interacts with substrate. The substrate site is built by Arg97 and Glu107. Residues Cys122, Cys125, Cys159, and Cys162 each coordinate a divalent metal cation.

The protein belongs to the 3-HAO family. Fe(2+) serves as cofactor.

It localises to the cytoplasm. It catalyses the reaction 3-hydroxyanthranilate + O2 = (2Z,4Z)-2-amino-3-carboxymuconate 6-semialdehyde. The protein operates within cofactor biosynthesis; NAD(+) biosynthesis; quinolinate from L-kynurenine: step 3/3. In terms of biological role, catalyzes the oxidative ring opening of 3-hydroxyanthranilate to 2-amino-3-carboxymuconate semialdehyde, which spontaneously cyclizes to quinolinate. This Candida albicans (strain SC5314 / ATCC MYA-2876) (Yeast) protein is 3-hydroxyanthranilate 3,4-dioxygenase.